A 63-amino-acid polypeptide reads, in one-letter code: Putative antitoxin AF_1084 (63 aa).

The protein belongs to the UPF0165 family.

In terms of biological role, possibly the antitoxin component of a type II toxin-antitoxin (TA) system. The polypeptide is Putative antitoxin AF_1084 (Archaeoglobus fulgidus (strain ATCC 49558 / DSM 4304 / JCM 9628 / NBRC 100126 / VC-16)).